Here is a 265-residue protein sequence, read N- to C-terminus: 3-methyl-2-oxobutanoate hydroxymethyltransferase (265 aa).

Residues aspartate 44 and aspartate 83 each coordinate Mg(2+). 3-methyl-2-oxobutanoate contacts are provided by residues 44 to 45 (DS), aspartate 83, and lysine 113. Residue glutamate 115 coordinates Mg(2+). Glutamate 183 serves as the catalytic Proton acceptor.

This sequence belongs to the PanB family. In terms of assembly, homodecamer; pentamer of dimers. Mg(2+) serves as cofactor.

It is found in the cytoplasm. It catalyses the reaction 3-methyl-2-oxobutanoate + (6R)-5,10-methylene-5,6,7,8-tetrahydrofolate + H2O = 2-dehydropantoate + (6S)-5,6,7,8-tetrahydrofolate. It participates in cofactor biosynthesis; (R)-pantothenate biosynthesis; (R)-pantoate from 3-methyl-2-oxobutanoate: step 1/2. Catalyzes the reversible reaction in which hydroxymethyl group from 5,10-methylenetetrahydrofolate is transferred onto alpha-ketoisovalerate to form ketopantoate. In Leptospira interrogans serogroup Icterohaemorrhagiae serovar copenhageni (strain Fiocruz L1-130), this protein is 3-methyl-2-oxobutanoate hydroxymethyltransferase.